The primary structure comprises 247 residues: Segregation and condensation protein A (247 aa).

This sequence belongs to the ScpA family. Component of a cohesin-like complex composed of ScpA, ScpB and the Smc homodimer, in which ScpA and ScpB bind to the head domain of Smc. The presence of the three proteins is required for the association of the complex with DNA.

Its subcellular location is the cytoplasm. In terms of biological role, participates in chromosomal partition during cell division. May act via the formation of a condensin-like complex containing Smc and ScpB that pull DNA away from mid-cell into both cell halves. The chain is Segregation and condensation protein A from Caldanaerobacter subterraneus subsp. tengcongensis (strain DSM 15242 / JCM 11007 / NBRC 100824 / MB4) (Thermoanaerobacter tengcongensis).